Here is a 224-residue protein sequence, read N- to C-terminus: Large ribosomal subunit protein uL3 (224 aa).

At Q159 the chain carries N5-methylglutamine.

Belongs to the universal ribosomal protein uL3 family. As to quaternary structure, part of the 50S ribosomal subunit. Forms a cluster with proteins L14 and L19. Methylated by PrmB.

One of the primary rRNA binding proteins, it binds directly near the 3'-end of the 23S rRNA, where it nucleates assembly of the 50S subunit. The protein is Large ribosomal subunit protein uL3 of Herminiimonas arsenicoxydans.